A 158-amino-acid polypeptide reads, in one-letter code: 2-C-methyl-D-erythritol 2,4-cyclodiphosphate synthase (158 aa).

A divalent metal cation-binding residues include Asp-9 and His-11. 4-CDP-2-C-methyl-D-erythritol 2-phosphate contacts are provided by residues Asp-9 to His-11 and His-35 to Ser-36. Position 43 (His-43) interacts with a divalent metal cation. 4-CDP-2-C-methyl-D-erythritol 2-phosphate contacts are provided by residues Asp-57–Gly-59, Phe-62–Asp-66, Ala-101–Ala-107, Thr-133–Glu-136, Phe-140, and Arg-143.

Belongs to the IspF family. In terms of assembly, homotrimer. The cofactor is a divalent metal cation.

It catalyses the reaction 4-CDP-2-C-methyl-D-erythritol 2-phosphate = 2-C-methyl-D-erythritol 2,4-cyclic diphosphate + CMP. The protein operates within isoprenoid biosynthesis; isopentenyl diphosphate biosynthesis via DXP pathway; isopentenyl diphosphate from 1-deoxy-D-xylulose 5-phosphate: step 4/6. Involved in the biosynthesis of isopentenyl diphosphate (IPP) and dimethylallyl diphosphate (DMAPP), two major building blocks of isoprenoid compounds. Catalyzes the conversion of 4-diphosphocytidyl-2-C-methyl-D-erythritol 2-phosphate (CDP-ME2P) to 2-C-methyl-D-erythritol 2,4-cyclodiphosphate (ME-CPP) with a corresponding release of cytidine 5-monophosphate (CMP). This chain is 2-C-methyl-D-erythritol 2,4-cyclodiphosphate synthase, found in Bacillus licheniformis (strain ATCC 14580 / DSM 13 / JCM 2505 / CCUG 7422 / NBRC 12200 / NCIMB 9375 / NCTC 10341 / NRRL NRS-1264 / Gibson 46).